The following is a 398-amino-acid chain: 4-hydroxy-3-methylbut-2-enyl diphosphate reductase (398 aa).

C66 contributes to the [4Fe-4S] cluster binding site. Position 96 (H96) interacts with (2E)-4-hydroxy-3-methylbut-2-enyl diphosphate. Residue H96 coordinates dimethylallyl diphosphate. Position 96 (H96) interacts with isopentenyl diphosphate. Position 157 (C157) interacts with [4Fe-4S] cluster. Residue H185 coordinates (2E)-4-hydroxy-3-methylbut-2-enyl diphosphate. Residue H185 participates in dimethylallyl diphosphate binding. H185 contacts isopentenyl diphosphate. The Proton donor role is filled by E187. Residue T250 coordinates (2E)-4-hydroxy-3-methylbut-2-enyl diphosphate. C288 is a [4Fe-4S] cluster binding site. (2E)-4-hydroxy-3-methylbut-2-enyl diphosphate contacts are provided by S317, S318, N319, and S379. Positions 317, 318, 319, and 379 each coordinate dimethylallyl diphosphate. Isopentenyl diphosphate is bound by residues S317, S318, N319, and S379.

Belongs to the IspH family. [4Fe-4S] cluster is required as a cofactor.

It carries out the reaction isopentenyl diphosphate + 2 oxidized [2Fe-2S]-[ferredoxin] + H2O = (2E)-4-hydroxy-3-methylbut-2-enyl diphosphate + 2 reduced [2Fe-2S]-[ferredoxin] + 2 H(+). It catalyses the reaction dimethylallyl diphosphate + 2 oxidized [2Fe-2S]-[ferredoxin] + H2O = (2E)-4-hydroxy-3-methylbut-2-enyl diphosphate + 2 reduced [2Fe-2S]-[ferredoxin] + 2 H(+). It functions in the pathway isoprenoid biosynthesis; dimethylallyl diphosphate biosynthesis; dimethylallyl diphosphate from (2E)-4-hydroxy-3-methylbutenyl diphosphate: step 1/1. It participates in isoprenoid biosynthesis; isopentenyl diphosphate biosynthesis via DXP pathway; isopentenyl diphosphate from 1-deoxy-D-xylulose 5-phosphate: step 6/6. Functionally, catalyzes the conversion of 1-hydroxy-2-methyl-2-(E)-butenyl 4-diphosphate (HMBPP) into a mixture of isopentenyl diphosphate (IPP) and dimethylallyl diphosphate (DMAPP). Acts in the terminal step of the DOXP/MEP pathway for isoprenoid precursor biosynthesis. The sequence is that of 4-hydroxy-3-methylbut-2-enyl diphosphate reductase from Prochlorococcus marinus (strain MIT 9313).